The chain runs to 226 residues: 7-cyano-7-deazaguanine synthase (226 aa).

9 to 19 (YSGGLDSTTCL) provides a ligand contact to ATP. The Zn(2+) site is built by Cys189, Cys199, Cys202, and Cys205.

This sequence belongs to the QueC family. Requires Zn(2+) as cofactor.

The catalysed reaction is 7-carboxy-7-deazaguanine + NH4(+) + ATP = 7-cyano-7-deazaguanine + ADP + phosphate + H2O + H(+). It functions in the pathway purine metabolism; 7-cyano-7-deazaguanine biosynthesis. Its function is as follows. Catalyzes the ATP-dependent conversion of 7-carboxy-7-deazaguanine (CDG) to 7-cyano-7-deazaguanine (preQ(0)). This is 7-cyano-7-deazaguanine synthase from Pelobacter propionicus (strain DSM 2379 / NBRC 103807 / OttBd1).